Consider the following 660-residue polypeptide: Epithelial sodium channel subunit gamma (660 aa).

Topologically, residues 1–55 (MSKSGKKLTQKLKKNLPVTGPQAPTLYELMQWYCLNTNTHGCRRIVVSKGRLRRW) are cytoplasmic. The helical transmembrane segment at 56–76 (IWISLTLCAVAVIFWQCALLL) threads the bilayer. Over 77 to 537 (MSYYSVSASI…VTLLSNFGGQ (461 aa)) the chain is Extracellular. Intrachain disulfides connect Cys101–Cys286, Cys209–Cys217, Cys263–Cys270, Cys375–Cys460, Cys397–Cys456, Cys401–Cys452, Cys410–Cys437, and Cys412–Cys426. Residues 538 to 558 (LGLWMSCSMICVLEIIEVFFI) form a helical membrane-spanning segment. Residues 559-660 (DSFWVVLRQR…IDSDEDVERL (102 aa)) lie on the Cytoplasmic side of the membrane.

The protein belongs to the amiloride-sensitive sodium channel (TC 1.A.6) family. SCNN1G subfamily. As to quaternary structure, component of the heterotrimeric epithelial sodium channel (ENaC) composed of an alpha/SCNN1A, a beta/SCNN1B and a gamma/SCNN1G subunit.

Its subcellular location is the apical cell membrane. It catalyses the reaction Na(+)(in) = Na(+)(out). Its activity is regulated as follows. Originally identified and characterized by its inhibition by the diuretic drug amiloride. In terms of biological role, this is one of the three pore-forming subunits of the heterotrimeric epithelial sodium channel (ENaC), a critical regulator of sodium balance and fluid homeostasis. ENaC operates in epithelial tissues, where it mediates the electrodiffusion of sodium ions from extracellular fluid through the apical membrane of cells, with water following osmotically. This is Epithelial sodium channel subunit gamma (scnn1g-a) from Xenopus laevis (African clawed frog).